The primary structure comprises 128 residues: Fluoride-specific ion channel FluC (128 aa).

Helical transmembrane passes span Val-4–Ile-24, Phe-37–Phe-57, Thr-65–Ser-85, and Phe-101–Ile-121. Na(+) contacts are provided by Gly-76 and Thr-79.

This sequence belongs to the fluoride channel Fluc/FEX (TC 1.A.43) family.

The protein resides in the cell inner membrane. The enzyme catalyses fluoride(in) = fluoride(out). Na(+) is not transported, but it plays an essential structural role and its presence is essential for fluoride channel function. In terms of biological role, fluoride-specific ion channel. Important for reducing fluoride concentration in the cell, thus reducing its toxicity. This chain is Fluoride-specific ion channel FluC, found in Desulfotalea psychrophila (strain LSv54 / DSM 12343).